The sequence spans 94 residues: Small ribosomal subunit protein bS18 (94 aa).

Belongs to the bacterial ribosomal protein bS18 family. In terms of assembly, part of the 30S ribosomal subunit. Forms a tight heterodimer with protein bS6.

In terms of biological role, binds as a heterodimer with protein bS6 to the central domain of the 16S rRNA, where it helps stabilize the platform of the 30S subunit. The chain is Small ribosomal subunit protein bS18 from Albidiferax ferrireducens (strain ATCC BAA-621 / DSM 15236 / T118) (Rhodoferax ferrireducens).